A 211-amino-acid chain; its full sequence is Urease accessory protein UreG (211 aa).

11–18 is a GTP binding site; sequence GPVGSGKT.

This sequence belongs to the SIMIBI class G3E GTPase family. UreG subfamily. Homodimer. UreD, UreF and UreG form a complex that acts as a GTP-hydrolysis-dependent molecular chaperone, activating the urease apoprotein by helping to assemble the nickel containing metallocenter of UreC. The UreE protein probably delivers the nickel.

The protein resides in the cytoplasm. Its function is as follows. Facilitates the functional incorporation of the urease nickel metallocenter. This process requires GTP hydrolysis, probably effectuated by UreG. The protein is Urease accessory protein UreG of Photorhabdus laumondii subsp. laumondii (strain DSM 15139 / CIP 105565 / TT01) (Photorhabdus luminescens subsp. laumondii).